The chain runs to 352 residues: C-C chemokine receptor type 5 (352 aa).

At 1–30 (MDYQVSSPTYDIDYYTSEPCQKINVKQIAG) the chain is on the extracellular side. Tyr3 carries the sulfotyrosine modification. 2 O-linked (GalNAc...) serine glycosylation sites follow: Ser6 and Ser7. Residues Tyr10, Tyr14, and Tyr15 each carry the sulfotyrosine modification. Intrachain disulfides connect Cys20/Cys269 and Cys101/Cys178. Residues 31–58 (RLLPPLYSLVFIFGFVGNILVVLILINC) form a helical membrane-spanning segment. The Cytoplasmic portion of the chain corresponds to 59–68 (KRLKSMTDIY). A helical membrane pass occupies residues 69–89 (LLNLAISDLLFLLTVPFWAHY). Residues 90-102 (AAAQWDFGNTMCQ) lie on the Extracellular side of the membrane. Residues 103–124 (LLTGLYFIGFFSGIFFIILLTI) form a helical membrane-spanning segment. Topologically, residues 125–141 (DRYLAIVHAVFALKART) are cytoplasmic. Residues 142–166 (VTFGVVTSVITWVVAVFASLPGIIF) form a helical membrane-spanning segment. The Extracellular segment spans residues 167–198 (TRSQREGLHYTCSSHFPYSQYQFWKNFQTLKI). Residues 199–218 (VILGLVLPLLVMVICYSGIL) traverse the membrane as a helical segment. At 219–235 (KTLLRCRNEKKRHRAVR) the chain is on the cytoplasmic side. Residues 236-260 (LIFTIMIVYFLFWAPYNIVLLLNTF) traverse the membrane as a helical segment. At 261 to 277 (QEFFGLNNCSSSNRLDQ) the chain is on the extracellular side. Residues 278 to 301 (AMQVTETLGMTHCCINPIIYAFVG) form a helical membrane-spanning segment. Residues 302 to 352 (EKFRNYLLVFFQKHIAKRFCKCCSIFQQEAPERASSVYTRSTGEQEISVGL) are Cytoplasmic-facing. S-palmitoyl cysteine attachment occurs at residues Cys321, Cys323, and Cys324. Ser336, Ser337, Ser342, and Ser349 each carry phosphoserine; by BARK1.

It belongs to the G-protein coupled receptor 1 family. In terms of assembly, interacts with PRAF2. Efficient ligand binding to CCL3/MIP-1alpha and CCL4/MIP-1beta requires sulfation, O-glycosylation and sialic acid modifications. Glycosylation on Ser-6 is required for efficient binding of CCL4. Interacts with GRK2. Interacts with ARRB1 and ARRB2. Interacts with CNIH4. Interacts with S100A4; this interaction stimulates T-lymphocyte chemotaxis. In terms of processing, sulfated on at least 2 of the N-terminal tyrosines. Sulfation is required for efficient binding of the chemokines, CCL3 and CCL4. Palmitoylation in the C-terminal is important for cell surface expression. Post-translationally, phosphorylation on serine residues in the C-terminal is stimulated by binding CC chemokines especially by APO-RANTES. In terms of processing, O-glycosylated, but not N-glycosylated. Ser-6 appears to be the major site even if Ser-7 may be also O-glycosylated. Also sialylated glycans present which contribute to chemokine binding. Thr-16 and Ser-17 may also be glycosylated and, if so, with small moieties such as a T-antigen.

It is found in the cell membrane. Receptor for a number of inflammatory CC-chemokines including CCL3/MIP-1-alpha, CCL4/MIP-1-beta and RANTES and subsequently transduces a signal by increasing the intracellular calcium ion level. May play a role in the control of granulocytic lineage proliferation or differentiation. Participates in T-lymphocyte migration to the infection site by acting as a chemotactic receptor. The polypeptide is C-C chemokine receptor type 5 (CCR5) (Theropithecus gelada (Gelada baboon)).